We begin with the raw amino-acid sequence, 315 residues long: Neurogenic differentiation factor 4 (315 aa).

A disordered region spans residues 39–71; that stretch reads ERGSIDGEEDDEEEEDGEKPKKRGPKKKKMTKA. Positions 44-55 are enriched in acidic residues; sequence DGEEDDEEEEDG. Over residues 58 to 70 the composition is skewed to basic residues; it reads PKKRGPKKKKMTK. The region spanning 78–130 is the bHLH domain; it reads VRRVKANARERSRMHGLNDALENLRRVMPCYSKTQKLSKIETLRLARNYIWAL. Residue Ser-89 is modified to Phosphoserine.

In terms of assembly, efficient DNA binding requires dimerization with another bHLH protein. Forms a heterodimer with the bHLH protein hes2, and weakly interacts with hey1/hrt1. Serine or threonine phosphorylation within the basic region may regulate neurogenic activity. In terms of tissue distribution, first expressed weakly at stage 12 in primary neuronal precursors. At stages 18 and 21, strongly expressed in the cranial ganglions, with weaker expression remaining in the spinal cord. Later, strongly expressed at sites of neuronal differentiation, namely the eye, forebrain and cranial ganglions.

It localises to the nucleus. Probably acts as a transcriptional activator. Mediates neuronal differentiation. Required for the regulation of amacrine cell fate specification in the retina. In Xenopus laevis (African clawed frog), this protein is Neurogenic differentiation factor 4 (neurod4).